The primary structure comprises 504 residues: Putative ribose/galactose/methyl galactoside import ATP-binding protein (504 aa).

2 ABC transporter domains span residues 5-242 and 252-497; these read ISVK…GRNL and TSAN…TRRE. 37-44 is an ATP binding site; that stretch reads GENGAGKS.

The protein belongs to the ABC transporter superfamily. Carbohydrate importer 2 (CUT2) (TC 3.A.1.2) family.

Its subcellular location is the cell inner membrane. It catalyses the reaction D-ribose(out) + ATP + H2O = D-ribose(in) + ADP + phosphate + H(+). The catalysed reaction is D-galactose(out) + ATP + H2O = D-galactose(in) + ADP + phosphate + H(+). Part of an ABC transporter complex involved in carbohydrate import. Could be involved in ribose, galactose and/or methyl galactoside import. Responsible for energy coupling to the transport system. This Albidiferax ferrireducens (strain ATCC BAA-621 / DSM 15236 / T118) (Rhodoferax ferrireducens) protein is Putative ribose/galactose/methyl galactoside import ATP-binding protein.